The following is a 146-amino-acid chain: Hemoglobin subunit beta (146 aa).

Valine 1 is modified (N-acetylvaline). In terms of domain architecture, Globin spans histidine 2–histidine 146. At serine 44 the chain carries Phosphoserine. Lysine 59 is subject to N6-acetyllysine. A heme b-binding site is contributed by histidine 63. Lysine 82 is modified (N6-acetyllysine). Residue histidine 92 coordinates heme b. Cysteine 93 carries the S-nitrosocysteine modification. The residue at position 144 (lysine 144) is an N6-acetyllysine.

The protein belongs to the globin family. Heterotetramer of two alpha chains and two beta chains. In terms of tissue distribution, red blood cells.

Involved in oxygen transport from the lung to the various peripheral tissues. The sequence is that of Hemoglobin subunit beta from Tamias striatus (Eastern chipmunk).